A 371-amino-acid chain; its full sequence is Nuclear hormone receptor family member nhr-51 (371 aa).

A DNA-binding region (nuclear receptor) is located at residues 2-77 (NKNCLICHRK…MGMQAFPRRV (76 aa)). 2 NR C4-type zinc fingers span residues 5–25 (CLIC…CFAC) and 41–60 (CQKF…CKAC). The region spanning 98-337 (MDEQRHWRML…KQLVTDTFVD (240 aa)) is the NR LBD domain.

The protein belongs to the nuclear hormone receptor family.

It is found in the nucleus. Functionally, orphan nuclear receptor. The chain is Nuclear hormone receptor family member nhr-51 (nhr-51) from Caenorhabditis elegans.